Here is a 47-residue protein sequence, read N- to C-terminus: Small, acid-soluble spore protein N (47 aa).

Residues 1 to 47 are disordered; that stretch reads MPREHDKQSKFAPSHLGTKPVEYKRNKGKKMHDKSGETPIIMQTKGE.

Belongs to the SspN family.

It is found in the spore core. The sequence is that of Small, acid-soluble spore protein N from Bacillus licheniformis (strain ATCC 14580 / DSM 13 / JCM 2505 / CCUG 7422 / NBRC 12200 / NCIMB 9375 / NCTC 10341 / NRRL NRS-1264 / Gibson 46).